The sequence spans 586 residues: Arginine--tRNA ligase (586 aa).

The short motif at 131–141 is the 'HIGH' region element; the sequence is ANPTGPMHVGH.

The protein belongs to the class-I aminoacyl-tRNA synthetase family. In terms of assembly, monomer.

The protein localises to the cytoplasm. The enzyme catalyses tRNA(Arg) + L-arginine + ATP = L-arginyl-tRNA(Arg) + AMP + diphosphate. The polypeptide is Arginine--tRNA ligase (Azorhizobium caulinodans (strain ATCC 43989 / DSM 5975 / JCM 20966 / LMG 6465 / NBRC 14845 / NCIMB 13405 / ORS 571)).